The chain runs to 161 residues: Phosphopantetheine adenylyltransferase (161 aa).

Thr-9 is a substrate binding site. ATP-binding positions include 9-10 (TF) and His-17. The substrate site is built by Lys-41, Leu-73, and Arg-87. Residues 88-90 (GLR), Glu-98, and 123-129 (YQFISGT) contribute to the ATP site.

It belongs to the bacterial CoaD family. As to quaternary structure, homohexamer. It depends on Mg(2+) as a cofactor.

The protein localises to the cytoplasm. The catalysed reaction is (R)-4'-phosphopantetheine + ATP + H(+) = 3'-dephospho-CoA + diphosphate. The protein operates within cofactor biosynthesis; coenzyme A biosynthesis; CoA from (R)-pantothenate: step 4/5. Its function is as follows. Reversibly transfers an adenylyl group from ATP to 4'-phosphopantetheine, yielding dephospho-CoA (dPCoA) and pyrophosphate. The sequence is that of Phosphopantetheine adenylyltransferase from Cupriavidus necator (strain ATCC 17699 / DSM 428 / KCTC 22496 / NCIMB 10442 / H16 / Stanier 337) (Ralstonia eutropha).